A 383-amino-acid chain; its full sequence is Phosphoenolpyruvate/phosphate translocator 2, chloroplastic (383 aa).

A chloroplast-targeting transit peptide spans 1-55 (MFALTFLNPNPRLPSPLFLAKSTPESALSRRSRAFSSSNSYPWRPNLRFNGFKLK). 8 consecutive transmembrane segments (helical) span residues 76–96 (GLKL…YNIF), 108–128 (ATVT…MWLL), 143–163 (VIVQ…VSLG), 179–199 (FFTV…WIVC), 210–232 (LASF…SNVT), 253–273 (INLF…LAIL), 299–319 (IMSL…YMIL), and 350–369 (VSPL…YLYS). An EamA domain is found at 93-212 (YNIFNKQVLR…PIVAGVSLAS (120 aa)).

It belongs to the TPT transporter family. PPT (TC 2.A.7.9) subfamily. Widely expressed in leaves throughout development. In flowers, expressed in sepals and pistils.

It localises to the plastid. Its subcellular location is the chloroplast membrane. Its function is as follows. Phosphoenolpyruvate/phosphate translocator that transports phosphoenolpyruvate (PEP), 2-phosphoglycerate and 3-phosphoglycerate. This chain is Phosphoenolpyruvate/phosphate translocator 2, chloroplastic (PPT2), found in Arabidopsis thaliana (Mouse-ear cress).